We begin with the raw amino-acid sequence, 335 residues long: 3-ketodihydrosphingosine reductase TSC10 (335 aa).

Positions 42, 44, 45, 46, 67, 68, 71, 95, and 96 each coordinate NADPH. Residues 42–46 (GGSSG) carry the GXSXG motif. The tract at residues 141–207 (LKDGLDGVYW…RGLSDALRSE (67 aa)) is involved in homodimer formation. The active-site Proton acceptor is the Tyr-190. Tyr-190, Lys-194, and Ile-223 together coordinate NADP(+). The active-site Lowers pKa of active site Tyr is Lys-194. The chain crosses the membrane as a helical span at residues 288-308 (TNNFLLDTLWLIVSSVGVPIW).

The protein belongs to the short-chain dehydrogenases/reductases (SDR) family. Homodimer; a minor portion forms homotetramers.

The protein resides in the endoplasmic reticulum membrane. The catalysed reaction is sphinganine + NADP(+) = 3-oxosphinganine + NADPH + H(+). It participates in lipid metabolism; sphingolipid metabolism. Functionally, catalyzes the reduction of 3'-oxosphinganine (3-ketodihydrosphingosine/KDS) to sphinganine (dihydrosphingosine/DHS), the second step of de novo sphingolipid biosynthesis. This is 3-ketodihydrosphingosine reductase TSC10 (TSC10) from Cryptococcus neoformans var. neoformans serotype D (strain JEC21 / ATCC MYA-565) (Filobasidiella neoformans).